A 568-amino-acid polypeptide reads, in one-letter code: Urease subunit alpha (568 aa).

Ni(2+)-binding residues include His134, His136, and Lys217. N6-carboxylysine is present on Lys217. His219 is a substrate binding site. 2 residues coordinate Ni(2+): His246 and His272. The active-site Proton donor is the His320. Residue Asp360 participates in Ni(2+) binding.

It belongs to the metallo-dependent hydrolases superfamily. Urease alpha subunit family. In terms of assembly, heterotrimer of UreA (gamma), UreB (beta) and UreC (alpha) subunits. Three heterotrimers associate to form the active enzyme. Requires Ni cation as cofactor. In terms of processing, carboxylation allows a single lysine to coordinate two nickel ions.

Its subcellular location is the cytoplasm. It carries out the reaction urea + 2 H2O + H(+) = hydrogencarbonate + 2 NH4(+). It functions in the pathway nitrogen metabolism; urea degradation; CO(2) and NH(3) from urea (urease route): step 1/1. The sequence is that of Urease subunit alpha from Marinomonas sp. (strain MWYL1).